We begin with the raw amino-acid sequence, 87 residues long: Cell division topological specificity factor (87 aa).

This sequence belongs to the MinE family.

Prevents the cell division inhibition by proteins MinC and MinD at internal division sites while permitting inhibition at polar sites. This ensures cell division at the proper site by restricting the formation of a division septum at the midpoint of the long axis of the cell. The protein is Cell division topological specificity factor of Leptothrix cholodnii (strain ATCC 51168 / LMG 8142 / SP-6) (Leptothrix discophora (strain SP-6)).